The primary structure comprises 248 residues: MAGHSKFKNIMHRKGRADAARSKLFSKLSREITVAAKTGMPDPAMNPRLRLAVQNAKAESMPKDNIDRAIKKAQGGDAETYEEIRYEGFGPGGVGVIVEALTDNRNRAAANVRSIFTKNGGNLGETNSVAFMWDRVGQIVYGPEAGSEDKVMEAAIEAGADDVESDEDGHTIWTAYDALNEVAQALEAALGAAKATRIAWRPKAMTPVSGDAAATLMKLIEALEDEDDVQNVYSNADISAEELEKLAS.

Belongs to the TACO1 family.

The protein localises to the cytoplasm. This Phenylobacterium zucineum (strain HLK1) protein is Probable transcriptional regulatory protein PHZ_c3068.